The chain runs to 454 residues: tRNA modification GTPase MnmE (454 aa).

The (6S)-5-formyl-5,6,7,8-tetrahydrofolate site is built by Arg-23, Glu-80, and Lys-120. Positions 216–377 (GMKVVIAGRP…LRNHLKQSMG (162 aa)) constitute a TrmE-type G domain. Asn-226 contacts K(+). Residues 226–231 (NAGKSS), 245–251 (TDIAGTT), 270–273 (DTAG), 335–338 (NKAD), and 358–360 (SAR) each bind GTP. Ser-230 lines the Mg(2+) pocket. 3 residues coordinate K(+): Thr-245, Ile-247, and Thr-250. A Mg(2+)-binding site is contributed by Thr-251. (6S)-5-formyl-5,6,7,8-tetrahydrofolate is bound at residue Lys-454.

This sequence belongs to the TRAFAC class TrmE-Era-EngA-EngB-Septin-like GTPase superfamily. TrmE GTPase family. In terms of assembly, homodimer. Heterotetramer of two MnmE and two MnmG subunits. Requires K(+) as cofactor.

It localises to the cytoplasm. In terms of biological role, exhibits a very high intrinsic GTPase hydrolysis rate. Involved in the addition of a carboxymethylaminomethyl (cmnm) group at the wobble position (U34) of certain tRNAs, forming tRNA-cmnm(5)s(2)U34. The protein is tRNA modification GTPase MnmE of Klebsiella pneumoniae subsp. pneumoniae (strain ATCC 700721 / MGH 78578).